We begin with the raw amino-acid sequence, 377 residues long: Protein FAM199X-B (377 aa).

Positions 240-254 are enriched in basic and acidic residues; it reads KEHSPRQRCTRESWK. The segment at 240–350 is disordered; it reads KEHSPRQRCT…EQRQARKERI (111 aa). Residues 256-301 show a composition bias toward low complexity; that stretch reads TSYSTASTSGVSGASVSSSSASMVSTASSTGSSGGNSASNSSANMS. Residues 319 to 338 are compositionally biased toward basic residues; the sequence is DSKKRSKQRKLQQKALRKRQ. Residues 321–349 adopt a coiled-coil conformation; it reads KKRSKQRKLQQKALRKRQLKEQRQARKER. The span at 339 to 350 shows a compositional bias: basic and acidic residues; that stretch reads LKEQRQARKERI.

It belongs to the FAM199 family.

This chain is Protein FAM199X-B (fam199x-b), found in Xenopus laevis (African clawed frog).